The primary structure comprises 819 residues: MHAMESRVLLRTFCVILGLGAVWGLGVDPSLQIDVLTELELGESTDGVRQVPGLHNGTKAFLFQESPRSIKASTATAERFFQKLRNKHEFTILVTLKQIHLNSGVILSIHHLDHRYLELESSGHRNEIRLHYRSGTHRPHTEVFPYILADAKWHKLSLAFSASHLILHIDCNKIYERVVEMPSTDLPLGTTFWLGQRNNAHGYFKGIMQDVHVLVMPQGFIAQCPDLNRTCPTCNDFHGLVQKIMELQDILSKTSAKLSRAEQRMNRLDQCYCERTCTVKGTTYRESESWTDGCKNCTCLNGTIQCETLVCPAPDCPPKSAPAYVDGKCCKECKSTCQFQGRSYFEGERNTVYSSSGMCVLYECKDQTMKLVENIGCPPLDCPESHQIALSHSCCKVCKGYDFCSEKHTCMENSVCRNLNDRAVCSCRDGFRALREDNAYCEDIDECAEGRHYCRENTMCVNTPGSFMCICKTGYIRIDDYSCTEHDECLTNQHNCDENALCFNTVGGHNCVCKPGYTGNGTTCKAFCKDGCRNGGACIAANVCACPQGFTGPSCETDIDECSEGFVQCDSRANCINLPGWYHCECRDGYHDNGMFAPGGESCEDIDECGTGRHSCTNDTICFNLDGGYDCRCPHGKNCTGDCVHEGKVKHTGQIWVLENDRCSVCSCQTGFVMCRRMVCDCENPTVDLSCCPECDPRLSSQCLHQNGETVYNSGDTWVQDCRQCRCLQGEVDCWPLACPEVECEFSVLPENECCPRCVTDPCQADTIRNDITKTCLDEMNVVRFTGSSWIKHGTECTLCQCKNGHLCCSVDPQCLQEL.

The first 24 residues, M1–G24, serve as a signal peptide directing secretion. N56, N228, N296, and N301 each carry an N-linked (GlcNAc...) asparagine glycan. A Laminin G-like domain is found at P67–C231. A VWFC 1 domain is found at R275–K334. In terms of domain architecture, EGF-like 1 spans G400–E442. 3 disulfide bridges follow: C404–C416, C410–C425, and C427–C441. 3 residues coordinate Ca(2+): D443, I444, and E446. The region spanning D443 to T484 is the EGF-like 2; calcium-binding domain. 9 cysteine pairs are disulfide-bonded: C447–C460, C454–C469, C471–C483, C489–C502, C496–C511, C513–C524, C528–C538, C532–C544, and C546–C555. Ca(2+) is bound by residues N462, T463, and S466. The 41-residue stretch at E485–K525 folds into the EGF-like 3; calcium-binding domain. Residue N520 is glycosylated (N-linked (GlcNAc...) asparagine). An EGF-like 4 domain is found at A526–E556. O-linked (GlcNAc...) threonine glycosylation occurs at T551. 3 residues coordinate Ca(2+): D558, I559, and E561. In terms of domain architecture, EGF-like 5; calcium-binding spans D558–E604. 3 disulfides stabilise this stretch: C562/C575, C569/C584, and C586/C603. 3 residues coordinate Ca(2+): N577, L578, and W581. D605, I606, and E608 together coordinate Ca(2+). The EGF-like 6; calcium-binding domain occupies D605–T640. Intrachain disulfides connect C609–C622, C616–C631, and C633–C639. N618 carries N-linked (GlcNAc...) asparagine glycosylation. Positions 624, 625, and 628 each coordinate Ca(2+). A glycan (N-linked (GlcNAc...) asparagine) is linked at N638. In terms of domain architecture, VWFC 2 spans S701–V759.

Homotrimer. Interacts with NICOL1; this interaction triggers epididymal differentiation. Interacts (via EGF domains) with ROBO3 (via FN domains); binding to ROBO3 induces repulsive guidance cue for commissural axons. As to expression, expressed in brain and testis but not in epididymis. Expressed in regions flanking the commissural axon trajectory, including the ventral horn.

It is found in the secreted. Plays multiple roles in neural tissues, regulates neuronal proliferation, survival, differentiation, polarization, as well as axon guidance and synaptic functions. Plays an important role in axon development during neuronal differentiation through the MAPK intracellular signaling pathway. Via binding to its receptor ROBO3, plays a role in axon guidance, functioning as a repulsive axon guidance cue that contributes to commissural axon guidance to the midline. Required for neuron survival through the modulation of MAPK signaling pathways too. Involved in the regulation of hypothalamic GNRH secretion and the control of puberty. In terms of biological role, epididymal-secreted protein that signals through a ROS1-pathway to regulate the epididymal initial segment (IS) maturation, sperm maturation and male fertility. This chain is Protein kinase C-binding protein NELL2, found in Mus musculus (Mouse).